A 730-amino-acid polypeptide reads, in one-letter code: uncharacterized protein (730 aa).

The span at 615 to 625 shows a compositional bias: basic and acidic residues; it reads FDKENSFDPSD. 2 disordered regions span residues 615–667 and 684–730; these read FDKE…SSFS and KSGS…FGKI. 2 stretches are compositionally biased toward low complexity: residues 653–667 and 684–701; these read SSSS…SSFS and KSGS…NSSS. The segment covering 713-723 has biased composition (basic residues); it reads KKKKKKKKKKS.

This is an uncharacterized protein from Saccharomyces cerevisiae (strain ATCC 204508 / S288c) (Baker's yeast).